A 573-amino-acid chain; its full sequence is Oxygen sensor histidine kinase response regulator DosT (573 aa).

GAF domains follow at residues 61 to 198 (KLDA…GIAV) and 229 to 366 (DPAM…ALAW). Heme is bound at residue histidine 147. In terms of domain architecture, Histidine kinase spans 380 to 573 (ILTDRDRIAR…TLLRWSAPLR (194 aa)). Histidine 392 carries the post-translational modification Phosphohistidine; by autocatalysis.

It depends on Mg(2+) as a cofactor. Requires heme as cofactor.

The protein resides in the cytoplasm. Its function is as follows. Interacts with the two-component regulatory system DevR/DevS (DosR/DosS) involved in onset of the dormancy response. Required for full induction of the DevR (DosR) regulon; required during early adaptation to anaerobiosis, to start induction of the DevR regulon. May act as a direct hypoxia/oxygen sensor. May be the secondary sensor for CO. Donates a phosphate group to DevR (DosR). In Mycobacterium tuberculosis (strain CDC 1551 / Oshkosh), this protein is Oxygen sensor histidine kinase response regulator DosT (dosT).